The following is a 133-amino-acid chain: Basic leucine zipper transcriptional factor ATF-like 3 (133 aa).

Residues 1–68 (MSQGPPAGGV…EHESLEQENS (68 aa)) form a disordered region. 2 positions are modified to phosphoserine: Ser-2 and Ser-24. The span at 11 to 24 (LQSSVAAPGNQPQS) shows a compositional bias: polar residues. The bZIP domain occupies 28 to 91 (DDRKVRRREK…RHLTEALKEH (64 aa)). The tract at residues 30-55 (RKVRRREKNRVAAQRSRKKQTQKSDK) is basic motif. The segment covering 51–68 (QKSDKLHEEHESLEQENS) has biased composition (basic and acidic residues). Residues 56–84 (LHEEHESLEQENSVLRREIAKLKEELRHL) are leucine-zipper.

It belongs to the bZIP family. As to quaternary structure, heterodimer; heterodimerizes with JUN family proteins. Interacts with JUN. Ubiquitously expressed.

The protein localises to the nucleus. AP-1 family transcription factor that controls the differentiation of CD8(+) thymic conventional dendritic cells in the immune system. Acts via the formation of a heterodimer with JUN family proteins that recognizes and binds DNA sequence 5'-TGA[CG]TCA-3' and regulates expression of target genes. Required for development of CD8-alpha(+) classical dendritic cells (cDCs) and related CD103(+) dendritic cells that cross-present antigens to CD8 T-cells and produce interleukin-12 (IL12) in response to pathogens. The sequence is that of Basic leucine zipper transcriptional factor ATF-like 3 (Batf3) from Rattus norvegicus (Rat).